The sequence spans 202 residues: Shikimate kinase (202 aa).

Residue 20-25 participates in ATP binding; that stretch reads GSGKST. Ser-24 is a Mg(2+) binding site. Residues Asp-42, Arg-66, and Gly-88 each coordinate substrate. Arg-126 is a binding site for ATP. A substrate-binding site is contributed by Arg-153.

This sequence belongs to the shikimate kinase family. Monomer. Mg(2+) serves as cofactor.

The protein resides in the cytoplasm. The enzyme catalyses shikimate + ATP = 3-phosphoshikimate + ADP + H(+). Its pathway is metabolic intermediate biosynthesis; chorismate biosynthesis; chorismate from D-erythrose 4-phosphate and phosphoenolpyruvate: step 5/7. Its function is as follows. Catalyzes the specific phosphorylation of the 3-hydroxyl group of shikimic acid using ATP as a cosubstrate. The protein is Shikimate kinase of Chlorobium luteolum (strain DSM 273 / BCRC 81028 / 2530) (Pelodictyon luteolum).